Here is a 539-residue protein sequence, read N- to C-terminus: Probable protein kinase UbiB (539 aa).

The helical transmembrane segment at 23–43 threads the bilayer; the sequence is DLLFALPLPWWMLALRFVLPW. The Protein kinase domain maps to 125-492; that stretch reads RFDEKPLASA…WHDRKDEPVL (368 aa). ATP-binding positions include 131 to 139 and K153; that span reads LASASVAQV. The active-site Proton acceptor is D288. 2 helical membrane-spanning segments follow: residues 494 to 514 and 517 to 537; these read LIGA…SEAA and LLTL…YLIV.

This sequence belongs to the ABC1 family. UbiB subfamily.

Its subcellular location is the cell inner membrane. It functions in the pathway cofactor biosynthesis; ubiquinone biosynthesis [regulation]. Functionally, is probably a protein kinase regulator of UbiI activity which is involved in aerobic coenzyme Q (ubiquinone) biosynthesis. The protein is Probable protein kinase UbiB of Pseudomonas syringae pv. syringae (strain B728a).